We begin with the raw amino-acid sequence, 121 residues long: Small ribosomal subunit protein uS13 (121 aa).

The disordered stretch occupies residues 97–121 (VRGQRTRTNARTRRGARKTVAGKKK). Residues 100-121 (QRTRTNARTRRGARKTVAGKKK) show a composition bias toward basic residues.

Belongs to the universal ribosomal protein uS13 family. In terms of assembly, part of the 30S ribosomal subunit. Forms a loose heterodimer with protein S19. Forms two bridges to the 50S subunit in the 70S ribosome.

Its function is as follows. Located at the top of the head of the 30S subunit, it contacts several helices of the 16S rRNA. In the 70S ribosome it contacts the 23S rRNA (bridge B1a) and protein L5 of the 50S subunit (bridge B1b), connecting the 2 subunits; these bridges are implicated in subunit movement. Contacts the tRNAs in the A and P-sites. The chain is Small ribosomal subunit protein uS13 from Synechococcus sp. (strain WH7803).